A 375-amino-acid chain; its full sequence is Protein RIC-3 (375 aa).

The first 29 residues, 1–29 (MALSAVQKVVLFSCLVLCVSLLLPRAYIA), serve as a signal peptide directing secretion. The Lumenal segment spans residues 30 to 90 (RGKPAAQEGN…GGGGGTRPSL (61 aa)). The segment covering 38–47 (GNTGLFQSSG) has biased composition (polar residues). The interval 38–63 (GNTGLFQSSGHHPKPTDGRPGGAHFP) is disordered. Residues 91 to 111 (VGQIIPIYGFGILLYILYILF) form a helical membrane-spanning segment. Residues 112–375 (KLSSKGKSTK…RKRNTKGIEY (264 aa)) lie on the Cytoplasmic side of the membrane. Positions 135–165 (KRKITDYELSQLQDKLKETEEAMEKIISRLG) form a coiled coil. The interval 251 to 375 (SAEQVAEQMG…RKRNTKGIEY (125 aa)) is disordered. Polar residues predominate over residues 286–296 (GDQQAQGTISA). Over residues 305-319 (EDIEEDEDEDEDPEV) the composition is skewed to acidic residues. Residues 365–375 (LRKRNTKGIEY) show a composition bias toward basic residues.

It belongs to the ric-3 family.

The protein localises to the endoplasmic reticulum membrane. Its function is as follows. Molecular chaperone which facilitates proper subunit assembly andsurface trafficking of alpha-7 (CHRNA7) and alpha-8 (CHRNA8) nicotinic acetylcholine receptors. May also promote functional expression of homomeric serotoninergic 5-HT3 receptors, and of heteromeric acetylcholine receptors. The chain is Protein RIC-3 (ric3) from Xenopus tropicalis (Western clawed frog).